Consider the following 97-residue polypeptide: Putative membrane protein insertion efficiency factor (97 aa).

This sequence belongs to the UPF0161 family.

Its subcellular location is the cell inner membrane. Its function is as follows. Could be involved in insertion of integral membrane proteins into the membrane. This chain is Putative membrane protein insertion efficiency factor, found in Chlamydia muridarum (strain MoPn / Nigg).